The primary structure comprises 115 residues: Arsenic resistance transcriptional regulator ArsR2 (115 aa).

One can recognise an HTH arsR-type domain in the interval 1–90 (MITPPDVFKS…EMLQVTLQAN (90 aa)). Arsenite contacts are provided by Cys30 and Cys32. Residues 31–54 (VCELMCALNDSQPKISRHLAQLRS) constitute a DNA-binding region (H-T-H motif).

Homodimer.

The protein localises to the cytoplasm. Functionally, binds arsenite and regulates the expression of arsenic efflux pumps. In vitro, also binds antimony and bismuth, but not arsenate. The protein is Arsenic resistance transcriptional regulator ArsR2 of Pseudomonas putida (strain ATCC 47054 / DSM 6125 / CFBP 8728 / NCIMB 11950 / KT2440).